The following is a 231-amino-acid chain: dTTP/UTP pyrophosphatase (231 aa).

Catalysis depends on D81, which acts as the Proton acceptor.

The protein belongs to the Maf family. YhdE subfamily. Requires a divalent metal cation as cofactor.

It localises to the cytoplasm. The enzyme catalyses dTTP + H2O = dTMP + diphosphate + H(+). It carries out the reaction UTP + H2O = UMP + diphosphate + H(+). Its function is as follows. Nucleoside triphosphate pyrophosphatase that hydrolyzes dTTP and UTP. May have a dual role in cell division arrest and in preventing the incorporation of modified nucleotides into cellular nucleic acids. This Lawsonia intracellularis (strain PHE/MN1-00) protein is dTTP/UTP pyrophosphatase.